Reading from the N-terminus, the 445-residue chain is UNC93-like protein MFSD11 (445 aa).

The chain crosses the membrane as a helical span at residues 8–28; it reads LLNIIILGIGFMFMFTAFQTS. Residue Asn40 is glycosylated (N-linked (GlcNAc...) asparagine). The next 4 helical transmembrane spans lie at 53–73, 74–94, 98–118, and 138–158; these read AIIY…VAVI, GCQM…AMFI, TWSF…LWTA, and IFWA…YLAW. A glycan (N-linked (GlcNAc...) asparagine) is linked at Asn163. Transmembrane regions (helical) follow at residues 170-190, 239-259, 277-297, 309-329, 345-365, 385-405, and 415-435; these read RTVF…FFLI, MLLL…YSGV, LIGL…GLFG, PVVI…YLYM, AFIN…GLGD, APAF…AFFY, and LLIL…VEWG.

The protein belongs to the unc-93 family.

The protein resides in the membrane. The sequence is that of UNC93-like protein MFSD11 (mfsd11) from Xenopus tropicalis (Western clawed frog).